The sequence spans 815 residues: Cell division cycle protein 48 (815 aa).

The tract at residues 1–30 (MNAPSTMTDKKPEVEHLQGENPPKDTYSAE) is disordered. Residues 8 to 18 (TDKKPEVEHLQ) are compositionally biased toward basic and acidic residues. ATP-binding positions include 267–273 (PGTGKTL), Asn368, His404, and 541–546 (GTGKTL). The segment at 794-815 (DSADSNTNGPSFGNDGADDLYA) is disordered. The span at 795 to 804 (SADSNTNGPS) shows a compositional bias: polar residues.

It belongs to the AAA ATPase family. Component of the ribosome quality control complex (RQC), composed of the E3 ubiquitin ligase rkr1/ltn1, rqc1 and mtr1/rqc2, as well as cdc48 and its ubiquitin-binding cofactors. RQC forms a stable complex with 60S ribosomal subunits. Interacts with ubx2 and ubx3. Interacts with lub1. Interacts with rbd2 (via C-terminal SHP box); the interaction is required for rbd2-mediated cleavage of sre1 and sre2.

The protein resides in the cytoplasm. Its subcellular location is the nucleus. The enzyme catalyses ATP + H2O = ADP + phosphate + H(+). With respect to regulation, the first ATP-binding region has low ATPase activity. The second ATP-binding region is responsible for ATPase activity. ATP binding to the first ATP-binding region induces intrinsic activity of the second ATP-binding region. While ATP binding to the first ATP-binding region appears to prevent ATP hydrolysis by the second ATP-binding region, ADP-binding to first region promotes the coordinate and cooperative ATPase cycle of the second ATP-binding region. ATP binding to the first ATP-binding region induces a conformational change, promoting the rotation of the first ATP-binding region relative to the second ATP-binding region in the hexamer. Its function is as follows. ATP-dependent chaperone which probably uses the energy provided by ATP hydrolysis to generate mechanical force to unfold substrate proteins, disassemble protein complexes, and disaggregate protein aggregates. By recruiting and promoting the degradation of ubiquitinated proteins, plays a role in the ubiquitin fusion degradation (UFD) pathway. Has a role in the endoplasmic reticulum-associated degradation (ERAD) pathway which mediates the cytoplasmic elimination of misfolded proteins exported from the ER. Involved in spindle disassembly. Component of the ribosome quality control complex (RQC), a ribosome-associated complex that mediates ubiquitination and extraction of incompletely synthesized nascent chains for proteasomal degradation. CDC48 may provide the mechanical force that dislodges the polyubiquitinated nascent peptides from the exit channel. Required for ribophagy, a process which relocalizes ribosomal particles into the vacuole for degradation in response to starvation. Has a role in substrate recognition mediating rbd2-dependent cleavage of sterol regulatory element-binding protein sre1 and sre2. This chain is Cell division cycle protein 48, found in Schizosaccharomyces pombe (strain 972 / ATCC 24843) (Fission yeast).